The sequence spans 816 residues: H(+)/Cl(-) exchange transporter 5 (816 aa).

The Cytoplasmic segment spans residues 1-124; it reads MAMWQGAMDN…WALIHSVSDA (124 aa). A run of 2 helical transmembrane segments spans residues 125–162 and 208–231; these read FSGW…ICTG and VNYF…VKAF. The short motif at 237–241 is the Selectivity filter part_1 element; sequence GSGIP. Ser-238 is a binding site for chloride. The helical intramembrane region spans 240–247; that stretch reads IPEIKTIL. The next 2 helical transmembrane spans lie at 256 to 275 and 281 to 300; these read LGKW…VSSG and EGPL…HCFN. The short motif at 279 to 283 is the Selectivity filter part_2 element; sequence GKEGP. 2 intramembrane regions (helical) span residues 312-324 and 328-336; these read VLSA…VSVA and PIGGVLFSL. Transmembrane regions (helical) follow at residues 348–366, 389–414, 422–442, 498–518, and 523–542; these read LWRS…RSIN, LVPF…IAWC, LGKY…ILAF, MWQL…TFGM, and GLFI…LGVG. The Selectivity filter part_3 motif lies at 523 to 527; sequence GLFIP. Chloride is bound at residue Phe-525. Positions 570-584 form an intramembrane region, helical; sequence GLYAMVGAAACLGGV. Positions 585 to 587 form an intramembrane region, note=Loop between two helices; that stretch reads TRM. The segment at residues 588-599 is an intramembrane region (helical); that stretch reads TVSLVVIMFELT. The note=Loop between two helices intramembrane region spans 600 to 604; it reads GGLEY. Residues 605 to 622 traverse the membrane as a helical segment; the sequence is IVPLMAAAMTSKWVADAL. The Cytoplasmic segment spans residues 623 to 816; sequence GREGIYDAHI…NQDPESILFN (194 aa). Tyr-628 is a binding site for chloride. 2 consecutive CBS domains span residues 656–720 and 752–811; these read MKPR…ARKK and ILDL…QDPE. ATP is bound by residues Thr-666, 687–689, and 794–797; these read YSG and TKKD.

The protein belongs to the chloride channel (TC 2.A.49) family. ClC-5/CLCN5 subfamily. In terms of assembly, interacts with NEDD4 and NEDD4L. Ubiquitinated by NEDD4L in the presence of albumin; which promotes endocytosis and proteasomal degradation. Kidney specific.

Its subcellular location is the golgi apparatus membrane. The protein localises to the endosome membrane. It is found in the cell membrane. It catalyses the reaction 2 chloride(in) + H(+)(out) = 2 chloride(out) + H(+)(in). In terms of biological role, proton-coupled chloride transporter. Functions as antiport system and exchanges chloride ions against protons. Important for normal acidification of the endosome lumen. May play an important role in renal tubular function. The CLC channel family contains both chloride channels and proton-coupled anion transporters that exchange chloride or another anion for protons. The absence of conserved gating glutamate residues is typical for family members that function as channels. This chain is H(+)/Cl(-) exchange transporter 5 (Clcn5), found in Rattus norvegicus (Rat).